We begin with the raw amino-acid sequence, 281 residues long: Lipoyl synthase (281 aa).

[4Fe-4S] cluster-binding residues include Cys35, Cys40, Cys46, Cys61, Cys65, Cys68, and Ser274. One can recognise a Radical SAM core domain in the interval 47-263; it reads FGCGQATFLI…RDEALALGFR (217 aa).

Belongs to the radical SAM superfamily. Lipoyl synthase family. It depends on [4Fe-4S] cluster as a cofactor.

It is found in the cytoplasm. It carries out the reaction [[Fe-S] cluster scaffold protein carrying a second [4Fe-4S](2+) cluster] + N(6)-octanoyl-L-lysyl-[protein] + 2 oxidized [2Fe-2S]-[ferredoxin] + 2 S-adenosyl-L-methionine + 4 H(+) = [[Fe-S] cluster scaffold protein] + N(6)-[(R)-dihydrolipoyl]-L-lysyl-[protein] + 4 Fe(3+) + 2 hydrogen sulfide + 2 5'-deoxyadenosine + 2 L-methionine + 2 reduced [2Fe-2S]-[ferredoxin]. Its pathway is protein modification; protein lipoylation via endogenous pathway; protein N(6)-(lipoyl)lysine from octanoyl-[acyl-carrier-protein]: step 2/2. Catalyzes the radical-mediated insertion of two sulfur atoms into the C-6 and C-8 positions of the octanoyl moiety bound to the lipoyl domains of lipoate-dependent enzymes, thereby converting the octanoylated domains into lipoylated derivatives. This chain is Lipoyl synthase, found in Trichlorobacter lovleyi (strain ATCC BAA-1151 / DSM 17278 / SZ) (Geobacter lovleyi).